Consider the following 60-residue polypeptide: uncharacterized protein (60 aa).

This is an uncharacterized protein from Emericella nidulans (strain FGSC A4 / ATCC 38163 / CBS 112.46 / NRRL 194 / M139) (Aspergillus nidulans).